A 188-amino-acid chain; its full sequence is Ribosome maturation factor RimP (188 aa).

It belongs to the RimP family.

It is found in the cytoplasm. In terms of biological role, required for maturation of 30S ribosomal subunits. The chain is Ribosome maturation factor RimP from Erythrobacter litoralis (strain HTCC2594).